A 246-amino-acid chain; its full sequence is Small ribosomal subunit protein uS2 (246 aa).

The protein belongs to the universal ribosomal protein uS2 family.

The protein is Small ribosomal subunit protein uS2 of Burkholderia cenocepacia (strain ATCC BAA-245 / DSM 16553 / LMG 16656 / NCTC 13227 / J2315 / CF5610) (Burkholderia cepacia (strain J2315)).